The sequence spans 200 residues: Small ribosomal subunit protein uS4 (200 aa).

Residues 92-155 (SRLDAVVYSL…QKLNVIVESV (64 aa)) form the S4 RNA-binding domain.

This sequence belongs to the universal ribosomal protein uS4 family. As to quaternary structure, part of the 30S ribosomal subunit. Contacts protein S5. The interaction surface between S4 and S5 is involved in control of translational fidelity.

In terms of biological role, one of the primary rRNA binding proteins, it binds directly to 16S rRNA where it nucleates assembly of the body of the 30S subunit. Functionally, with S5 and S12 plays an important role in translational accuracy. The protein is Small ribosomal subunit protein uS4 of Staphylococcus aureus (strain MRSA252).